The chain runs to 808 residues: Bifunctional uridylyltransferase/uridylyl-removing enzyme (808 aa).

The interval 1–315 is uridylyltransferase; that stretch reads MEAESPCAAS…ALVRRPKRRP (315 aa). The tract at residues 316–609 is uridylyl-removing; sequence LDEGVVEYAG…EISPRDGERI (294 aa). Residues 430 to 544 enclose the HD domain; sequence VDRHVVETAV…LEVLHALSEA (115 aa). ACT domains lie at 610-686 and 730-805; these read DAVI…GMLQ and ILEV…VDEP.

Belongs to the GlnD family. Requires Mg(2+) as cofactor.

The catalysed reaction is [protein-PII]-L-tyrosine + UTP = [protein-PII]-uridylyl-L-tyrosine + diphosphate. It carries out the reaction [protein-PII]-uridylyl-L-tyrosine + H2O = [protein-PII]-L-tyrosine + UMP + H(+). Its function is as follows. Modifies, by uridylylation and deuridylylation, the PII regulatory protein (GlnB), in response to the nitrogen status of the cell that GlnD senses through the glutamine level. Under low glutamine levels, catalyzes the conversion of the PII protein and UTP to PII-UMP and PPi, while under higher glutamine levels, GlnD hydrolyzes PII-UMP to PII and UMP (deuridylylation). Thus, controls uridylylation state and activity of the PII protein, and plays an important role in the regulation of nitrogen assimilation and metabolism. The sequence is that of Bifunctional uridylyltransferase/uridylyl-removing enzyme from Mycobacterium tuberculosis (strain CDC 1551 / Oshkosh).